The following is a 434-amino-acid chain: Arrestin domain-containing protein 1 (434 aa).

The disordered stretch occupies residues 292–349 (SPCPGRESSPGTLSLVVPSAPPQEEAEAVASGPHFSDPVSLSTKSHSQQQPLSAPLGS). Over residues 330–343 (VSLSTKSHSQQQPL) the composition is skewed to polar residues. 2 consecutive short sequence motifs (PPxY motif) follow at residues 401 to 404 (PPEY) and 414 to 417 (PPSY).

This sequence belongs to the arrestin family. As to quaternary structure, interacts (via PPxY motifs) with ITCH (via WW domains); the interaction is direct and participates in the recruitment of the ubiquitin-protein ligase ITCH to the NOTCH1 receptor. Interacts with ARRB1 and ARRB2; the interaction is direct. Interacts with TSG101; may recruit TSG101 to the plasma membrane. Interacts (via PPxY motifs) with WWP2 (via WW domains); ubiquitinates ARRDC1. Interacts with SLC11A2; controls the incorporation of SLC11A2 into extracellular vesicles through an ubiquitination-dependent mechanism. Interacts with WWP1 (via WW domains). Interacts with NEDD4 (via WW domains). Interacts with PDCD6IP. In terms of processing, ubiquitinated. Ubiquitination by WWP2; promotes localization to extracellular microvesicles. Ubiquitinated by WWP1.

It is found in the cell membrane. Its function is as follows. Functions as an adapter recruiting ubiquitin-protein ligases to their specific substrates. Through an ubiquitination-dependent mechanism plays for instance a role in the incorporation of SLC11A2 into extracellular vesicles. More generally, plays a role in the extracellular transport of proteins between cells through the release in the extracellular space of microvesicles. By participating to the ITCH-mediated ubiquitination and subsequent degradation of NOTCH1, negatively regulates the NOTCH signaling pathway. In Mus musculus (Mouse), this protein is Arrestin domain-containing protein 1.